Consider the following 309-residue polypeptide: Dehydrogenase/reductase SDR family member 7B (309 aa).

Residues 1–4 (MDLT) lie on the Cytoplasmic side of the membrane. The chain crosses the membrane as a helical; Signal-anchor for type II membrane protein span at residues 5–25 (TWAIFPLLLGSIGVYSLYKLL). The Lumenal portion of the chain corresponds to 26–272 (QRLRSGAYLQ…AVGERRKELL (247 aa)). Residues S46 and L48 each coordinate NAD(+). Residue S178 coordinates substrate. Y191, K195, and T226 together coordinate NAD(+). The active-site Proton acceptor is Y191.

It belongs to the short-chain dehydrogenases/reductases (SDR) family.

Its subcellular location is the endoplasmic reticulum membrane. Functionally, putative oxidoreductase. This is Dehydrogenase/reductase SDR family member 7B (dhrs7b) from Xenopus tropicalis (Western clawed frog).